The chain runs to 337 residues: Hairy/enhancer-of-split related with YRPW motif protein 2 (337 aa).

Residues Met-1–Arg-52 form a disordered region. A compositionally biased stretch (acidic residues) spans Thr-8 to Ile-18. A compositionally biased stretch (polar residues) spans Ser-22–Ile-46. The interval Met-47 to Ala-116 is transcriptional repression and interaction with NCOR1 and SIN3A. The bHLH domain maps to Ala-48–Leu-103. The Orange domain occupies Met-122–Leu-157. Residues Leu-307 to Lys-325 show a composition bias toward polar residues. The tract at residues Leu-307–Phe-337 is disordered. The YRPW motif signature appears at Tyr-327–Trp-330.

Belongs to the HEY family. As to quaternary structure, may self-associate. Interacts with GATA4, HES1 and HEYL. Interacts with HDAC1, NCOR1 and SIN3A. Interacts with ARNT and GATA6.

Its subcellular location is the nucleus. Its function is as follows. Downstream effector of Notch signaling which may be required for cardiovascular development. Transcriptional repressor which binds preferentially to the canonical E box sequence 5'-CACGTG-3'. Represses transcription by the cardiac transcriptional activators GATA4 and GATA6. This is Hairy/enhancer-of-split related with YRPW motif protein 2 (HEY2) from Homo sapiens (Human).